The following is a 436-amino-acid chain: UDP-N-acetylmuramate--L-alanine ligase (436 aa).

108-114 (GAHGKTS) is an ATP binding site.

The protein belongs to the MurCDEF family.

The protein resides in the cytoplasm. It catalyses the reaction UDP-N-acetyl-alpha-D-muramate + L-alanine + ATP = UDP-N-acetyl-alpha-D-muramoyl-L-alanine + ADP + phosphate + H(+). It participates in cell wall biogenesis; peptidoglycan biosynthesis. In terms of biological role, cell wall formation. The chain is UDP-N-acetylmuramate--L-alanine ligase from Bacillus cereus (strain Q1).